The following is a 496-amino-acid chain: Aspartyl/glutamyl-tRNA(Asn/Gln) amidotransferase subunit B (496 aa).

Belongs to the GatB/GatE family. GatB subfamily. Heterotrimer of A, B and C subunits.

It carries out the reaction L-glutamyl-tRNA(Gln) + L-glutamine + ATP + H2O = L-glutaminyl-tRNA(Gln) + L-glutamate + ADP + phosphate + H(+). It catalyses the reaction L-aspartyl-tRNA(Asn) + L-glutamine + ATP + H2O = L-asparaginyl-tRNA(Asn) + L-glutamate + ADP + phosphate + 2 H(+). Its function is as follows. Allows the formation of correctly charged Asn-tRNA(Asn) or Gln-tRNA(Gln) through the transamidation of misacylated Asp-tRNA(Asn) or Glu-tRNA(Gln) in organisms which lack either or both of asparaginyl-tRNA or glutaminyl-tRNA synthetases. The reaction takes place in the presence of glutamine and ATP through an activated phospho-Asp-tRNA(Asn) or phospho-Glu-tRNA(Gln). The sequence is that of Aspartyl/glutamyl-tRNA(Asn/Gln) amidotransferase subunit B from Natronomonas pharaonis (strain ATCC 35678 / DSM 2160 / CIP 103997 / JCM 8858 / NBRC 14720 / NCIMB 2260 / Gabara) (Halobacterium pharaonis).